Reading from the N-terminus, the 191-residue chain is Calcium-activated potassium channel subunit beta-1 (191 aa).

Topologically, residues 1 to 15 are cytoplasmic; the sequence is MGKKLVMAQKRGETR. Residues 16 to 36 form a helical membrane-spanning segment; that stretch reads ALCLGVAMVMCAVITYYILGT. Topologically, residues 37 to 157 are extracellular; that stretch reads TMLPLYQKSV…YQRLYGPQAL (121 aa). Residues asparagine 80 and asparagine 142 are each glycosylated (N-linked (GlcNAc...) asparagine). Residues 158–178 traverse the membrane as a helical segment; sequence LASLFWPTFLLTGGLLIIAMV. Residues 179–191 lie on the Cytoplasmic side of the membrane; sequence KINRSLSILAAQK.

It belongs to the KCNMB (TC 8.A.14.1) family. KCNMB1 subfamily. Interacts with KCNMA1 tetramer. There are probably 4 molecules of KCMNB1 per KCNMA1 tetramer. Post-translationally, N-glycosylated.

Its subcellular location is the membrane. Functionally, regulatory subunit of the calcium activated potassium KCNMA1 (maxiK) channel. Modulates the calcium sensitivity and gating kinetics of KCNMA1, thereby contributing to KCNMA1 channel diversity. Increases the apparent Ca(2+)/voltage sensitivity of the KCNMA1 channel. It also modifies KCNMA1 channel kinetics and alters its pharmacological properties. It slows down the activation and the deactivation kinetics of the channel. Acts as a negative regulator of smooth muscle contraction by enhancing the calcium sensitivity to KCNMA1. Its presence is also a requirement for internal binding of the KCNMA1 channel opener dehydrosoyasaponin I (DHS-1) triterpene glycoside and for external binding of the agonist hormone 17-beta-estradiol (E2). Increases the binding activity of charybdotoxin (CTX) toxin to KCNMA1 peptide blocker by increasing the CTX association rate and decreasing the dissociation rate. The polypeptide is Calcium-activated potassium channel subunit beta-1 (KCNMB1) (Oryctolagus cuniculus (Rabbit)).